Consider the following 84-residue polypeptide: uncharacterized protein (84 aa).

The next 3 membrane-spanning stretches (helical) occupy residues 8–28, 30–50, and 63–83; these read IYFF…VNLL, INVI…ISTI, and VLFM…LYIP.

It localises to the cell membrane. This is an uncharacterized protein from Methanocaldococcus jannaschii (strain ATCC 43067 / DSM 2661 / JAL-1 / JCM 10045 / NBRC 100440) (Methanococcus jannaschii).